A 606-amino-acid polypeptide reads, in one-letter code: MRTLTESRRRQSGSSGCKKDSESDDDENTICSRAAIKRSVVYYLKNSTLHGLKYIAEESITIPERIFFGLAFVLVVILSVFFISNVYVKWSASPIIISTSAKQKLTSNMPFPAITICNLNQALLSKVDRIGRTSTNFSLLMGLCDQGGDTTISYIGTWKYFKAILVDVAQPCEKMLLYCSFGSREEDCSWLFTSILTDDGLCCNFNALHPSYLIRNYSDDVRLETAHPNTRYELIDWTPEKGYARNLPEFYFPRTSGGTGIRMGLTVVLNASIAEYYCTKSMSVGFKVLVHNPAELPKVSNYGFVVTAGREARIPIEPVYEDALPTIRSIKKSVRRCLFSDENDLAYYRTYSRKNCELECEAKLLLRECSCVLYYLPRIDPLARVCGPNDNQCTDRVQTEIESSLTNLSCENCWPGCFELTYRATLSTASIVSDPRFQAGENLPEYIFHGPYSNASEISILHFYYMTNIFRSTTKSEMFGFTEFLSNTGGLLGLFMGFSIFSVIEIFFYITVRPYCASRTLRQRHKRRLEQLSWLTPIRMPVRRALRRNRGGLLRNPPPPAYSDLQKFRGKLDKPETCKRKLWRTLQVRPVVDRADEELPTYPYLD.

Residues 1–26 (MRTLTESRRRQSGSSGCKKDSESDDD) form a disordered region. A run of 2 helical transmembrane segments spans residues 66-86 (IFFGLAFVLVVILSVFFISNV) and 490-510 (GLLGLFMGFSIFSVIEIFFYI).

This sequence belongs to the amiloride-sensitive sodium channel (TC 1.A.6) family. In terms of tissue distribution, expressed in water-sensing neurons in taste bristles on the proboscis but not in carbonation-sensing taste peg neurons (at protein level). Expressed in the tracheal system.

It localises to the cell membrane. Its function is as follows. Osmosensitive ion channel that mediates the cellular and behavioral response to water. Plays an essential role in gustatory water reception. Part of a complex that plays a role in tracheal liquid clearance. Probable role in sodium transport. The protein is Pickpocket protein 28 (ppk28) of Drosophila melanogaster (Fruit fly).